A 443-amino-acid polypeptide reads, in one-letter code: Transcriptional adapter 2-alpha (443 aa).

Residue Ser6 is modified to Phosphoserine. The ZZ-type zinc finger occupies 12 to 69; sequence SDKPPCRGCSSYLTEPYIKCAECGPPPFFLCLQCFTRGFEYKKHQSDHTYEIMTSDFP. Residues Cys17, Cys20, Cys31, Cys34, Cys42, Cys45, His55, and His59 each coordinate Zn(2+). The SANT domain maps to 70-122; the sequence is VLDPSWTAQEEMALLEAVMDCGFGNWQDVANQMCTKTKEECEKHYMKHFINNP. Glycyl lysine isopeptide (Lys-Gly) (interchain with G-Cter in SUMO2) cross-links involve residues Lys132 and Lys138. In terms of domain architecture, SWIRM spans 356–443; that stretch reads NSGRRSAPPL…LIREGYITKA (88 aa). A DNA-binding region spans residues 426-435; the sequence is KTRKIYDFLI.

In terms of assembly, interacts with GCN5. Interacts with NR3C1. Associated with the P/CAF protein in the PCAF complex. Component of the PCAF complex, at least composed of TADA2L/ADA2, TADA3L/ADA3, TAF5L/PAF65-beta, TAF6L/PAF65-alpha, TAF10/TAFII30, TAF12/TAFII20, TAF9/TAFII31 and TRRAP. Component of the ADA2A-containing complex (ATAC), composed of KAT14, KAT2A, TADA2L, TADA3L, ZZ3, MBIP, WDR5, YEATS2, CCDC101 and DR1. Interacts with CCDC134.

The protein resides in the nucleus. The protein localises to the chromosome. Functionally, component of the ATAC complex, a complex with histone acetyltransferase activity on histones H3 and H4. Required for the function of some acidic activation domains, which activate transcription from a distant site. Binds double-stranded DNA. Binds dinucleosomes, probably at the linker region between neighboring nucleosomes. Plays a role in chromatin remodeling. May promote TP53/p53 'Lys-321' acetylation, leading to reduced TP53 stability and transcriptional activity. May also promote XRCC6 acetylation thus facilitating cell apoptosis in response to DNA damage. The polypeptide is Transcriptional adapter 2-alpha (Tada2a) (Mus musculus (Mouse)).